A 189-amino-acid polypeptide reads, in one-letter code: dCTP deaminase (189 aa).

DCTP is bound by residues 112 to 117 (KSTYAR), 136 to 138 (TLE), Gln-157, Tyr-171, and Gln-181. Glu-138 serves as the catalytic Proton donor/acceptor.

This sequence belongs to the dCTP deaminase family. In terms of assembly, homotrimer.

It carries out the reaction dCTP + H2O + H(+) = dUTP + NH4(+). Its pathway is pyrimidine metabolism; dUMP biosynthesis; dUMP from dCTP (dUTP route): step 1/2. In terms of biological role, catalyzes the deamination of dCTP to dUTP. This Acinetobacter baumannii (strain SDF) protein is dCTP deaminase.